The sequence spans 99 residues: Aspartyl/glutamyl-tRNA(Asn/Gln) amidotransferase subunit C (99 aa).

This sequence belongs to the GatC family. As to quaternary structure, heterotrimer of A, B and C subunits.

It carries out the reaction L-glutamyl-tRNA(Gln) + L-glutamine + ATP + H2O = L-glutaminyl-tRNA(Gln) + L-glutamate + ADP + phosphate + H(+). The enzyme catalyses L-aspartyl-tRNA(Asn) + L-glutamine + ATP + H2O = L-asparaginyl-tRNA(Asn) + L-glutamate + ADP + phosphate + 2 H(+). In terms of biological role, allows the formation of correctly charged Asn-tRNA(Asn) or Gln-tRNA(Gln) through the transamidation of misacylated Asp-tRNA(Asn) or Glu-tRNA(Gln) in organisms which lack either or both of asparaginyl-tRNA or glutaminyl-tRNA synthetases. The reaction takes place in the presence of glutamine and ATP through an activated phospho-Asp-tRNA(Asn) or phospho-Glu-tRNA(Gln). The chain is Aspartyl/glutamyl-tRNA(Asn/Gln) amidotransferase subunit C from Albidiferax ferrireducens (strain ATCC BAA-621 / DSM 15236 / T118) (Rhodoferax ferrireducens).